The sequence spans 211 residues: Thiamine-phosphate synthase (211 aa).

Residues 37–41 and N69 contribute to the 4-amino-2-methyl-5-(diphosphooxymethyl)pyrimidine site; that span reads QLRIK. Residues D70 and D89 each coordinate Mg(2+). S108 contributes to the 4-amino-2-methyl-5-(diphosphooxymethyl)pyrimidine binding site. 134-136 lines the 2-[(2R,5Z)-2-carboxy-4-methylthiazol-5(2H)-ylidene]ethyl phosphate pocket; sequence TQT. Position 137 (K137) interacts with 4-amino-2-methyl-5-(diphosphooxymethyl)pyrimidine. 2-[(2R,5Z)-2-carboxy-4-methylthiazol-5(2H)-ylidene]ethyl phosphate is bound by residues G166 and 186–187; that span reads VS.

This sequence belongs to the thiamine-phosphate synthase family. Requires Mg(2+) as cofactor.

The enzyme catalyses 2-[(2R,5Z)-2-carboxy-4-methylthiazol-5(2H)-ylidene]ethyl phosphate + 4-amino-2-methyl-5-(diphosphooxymethyl)pyrimidine + 2 H(+) = thiamine phosphate + CO2 + diphosphate. It catalyses the reaction 2-(2-carboxy-4-methylthiazol-5-yl)ethyl phosphate + 4-amino-2-methyl-5-(diphosphooxymethyl)pyrimidine + 2 H(+) = thiamine phosphate + CO2 + diphosphate. The catalysed reaction is 4-methyl-5-(2-phosphooxyethyl)-thiazole + 4-amino-2-methyl-5-(diphosphooxymethyl)pyrimidine + H(+) = thiamine phosphate + diphosphate. It functions in the pathway cofactor biosynthesis; thiamine diphosphate biosynthesis; thiamine phosphate from 4-amino-2-methyl-5-diphosphomethylpyrimidine and 4-methyl-5-(2-phosphoethyl)-thiazole: step 1/1. Condenses 4-methyl-5-(beta-hydroxyethyl)thiazole monophosphate (THZ-P) and 2-methyl-4-amino-5-hydroxymethyl pyrimidine pyrophosphate (HMP-PP) to form thiamine monophosphate (TMP). In Salmonella paratyphi A (strain ATCC 9150 / SARB42), this protein is Thiamine-phosphate synthase.